The sequence spans 295 residues: Light-independent protochlorophyllide reductase iron-sulfur ATP-binding protein (295 aa).

Residues 39-44 (GIGKST) and Lys-68 contribute to the ATP site. Ser-43 is a binding site for Mg(2+). The [4Fe-4S] cluster site is built by Cys-124 and Cys-158. 209–210 (NR) contacts ATP.

The protein belongs to the NifH/BchL/ChlL family. In terms of assembly, homodimer. Protochlorophyllide reductase is composed of three subunits; ChlL, ChlN and ChlB. Requires [4Fe-4S] cluster as cofactor.

The catalysed reaction is chlorophyllide a + oxidized 2[4Fe-4S]-[ferredoxin] + 2 ADP + 2 phosphate = protochlorophyllide a + reduced 2[4Fe-4S]-[ferredoxin] + 2 ATP + 2 H2O. The protein operates within porphyrin-containing compound metabolism; chlorophyll biosynthesis (light-independent). Component of the dark-operative protochlorophyllide reductase (DPOR) that uses Mg-ATP and reduced ferredoxin to reduce ring D of protochlorophyllide (Pchlide) to form chlorophyllide a (Chlide). This reaction is light-independent. The L component serves as a unique electron donor to the NB-component of the complex, and binds Mg-ATP. In Prochlorococcus marinus (strain MIT 9301), this protein is Light-independent protochlorophyllide reductase iron-sulfur ATP-binding protein.